Consider the following 368-residue polypeptide: Anhydro-N-acetylmuramic acid kinase (368 aa).

Residue 13-20 participates in ATP binding; sequence GTSLDGVD.

It belongs to the anhydro-N-acetylmuramic acid kinase family.

It carries out the reaction 1,6-anhydro-N-acetyl-beta-muramate + ATP + H2O = N-acetyl-D-muramate 6-phosphate + ADP + H(+). Its pathway is amino-sugar metabolism; 1,6-anhydro-N-acetylmuramate degradation. The protein operates within cell wall biogenesis; peptidoglycan recycling. Its function is as follows. Catalyzes the specific phosphorylation of 1,6-anhydro-N-acetylmuramic acid (anhMurNAc) with the simultaneous cleavage of the 1,6-anhydro ring, generating MurNAc-6-P. Is required for the utilization of anhMurNAc either imported from the medium or derived from its own cell wall murein, and thus plays a role in cell wall recycling. The chain is Anhydro-N-acetylmuramic acid kinase from Hahella chejuensis (strain KCTC 2396).